We begin with the raw amino-acid sequence, 46 residues long: Large ribosomal subunit protein bL34c (46 aa).

The tract at residues 1–46 is disordered; the sequence is MSKRTLEGSHRKKVRKSGFLSRSQSPTGRRILKARRKKGRKMLVKY. Residues 30–46 are compositionally biased toward basic residues; sequence RILKARRKKGRKMLVKY.

Belongs to the bacterial ribosomal protein bL34 family.

Its subcellular location is the plastid. The protein resides in the cyanelle. This Cyanophora paradoxa protein is Large ribosomal subunit protein bL34c (rpl34).